The sequence spans 202 residues: Snake venom metalloproteinase atroxlysin-1 (202 aa).

One can recognise a Peptidase M12B domain in the interval 6–202 (RYVDLFIVVD…ENPQCILNKR (197 aa)). Aspartate 9 and aspartate 93 together coordinate Ca(2+). 3 cysteine pairs are disulfide-bonded: cysteine 117–cysteine 197, cysteine 157–cysteine 181, and cysteine 159–cysteine 164. Histidine 142 contributes to the Zn(2+) binding site. Glutamate 143 is an active-site residue. Zn(2+) is bound by residues histidine 146 and histidine 152. Cysteine 197 and asparagine 200 together coordinate Ca(2+).

Belongs to the venom metalloproteinase (M12B) family. P-I subfamily. As to quaternary structure, monomer. Zn(2+) is required as a cofactor. In terms of tissue distribution, expressed by the venom gland.

The protein localises to the secreted. Inhibited by EDTA, DTT and high concentrations of zinc ions (&gt;2 mM). Weakly inhibited by TLCK. Not inhibited by PMSF. Activated by calcium ions. Functionally, snake venom zinc metalloproteinase that acts on fibrinogen, fibrin, fibronectin (FN1), type I collagen, type IV collagen, integrin alpha-7/beta-1 (ITGA7/ITGB1) and integrin alpha-1/beta-1 (ITGA1/ITGB1). Binds to fibronectin (FN1), fibrinogen and, weakly, to type I collagen and laminin. Cleaves Xaa-Leu bonds. Inhibits ADP- and collagen-induced platelet aggregation both in the presence (IC(50)=1.4 uM for collagen) and in the absence (IC(50)=2.2 uM for collagen) of cofactors. Has hemorrhagic activity. The protein is Snake venom metalloproteinase atroxlysin-1 of Bothrops atrox (Barba amarilla).